Reading from the N-terminus, the 165-residue chain is Small ribosomal subunit protein uS5 (165 aa).

An S5 DRBM domain is found at 13 to 76 (LEEKVLVVNR…EAARKNLITI (64 aa)).

The protein belongs to the universal ribosomal protein uS5 family. Part of the 30S ribosomal subunit. Contacts proteins S4 and S8.

In terms of biological role, with S4 and S12 plays an important role in translational accuracy. Functionally, located at the back of the 30S subunit body where it stabilizes the conformation of the head with respect to the body. This Chlamydia abortus (strain DSM 27085 / S26/3) (Chlamydophila abortus) protein is Small ribosomal subunit protein uS5.